We begin with the raw amino-acid sequence, 343 residues long: Sulfate/thiosulfate import ATP-binding protein CysA (343 aa).

The ABC transporter domain maps to 3 to 233; sequence ILIENISKTF…PATPFVMGFM (231 aa). Residue 35-42 coordinates ATP; the sequence is GPSGSGKS.

It belongs to the ABC transporter superfamily. Sulfate/tungstate importer (TC 3.A.1.6) family.

The protein resides in the plastid. Its subcellular location is the chloroplast. The catalysed reaction is sulfate(out) + ATP + H2O = sulfate(in) + ADP + phosphate + H(+). The enzyme catalyses thiosulfate(out) + ATP + H2O = thiosulfate(in) + ADP + phosphate + H(+). In terms of biological role, part of the ABC transporter complex involved in sulfate/thiosulfate import. Responsible for energy coupling to the transport system. The polypeptide is Sulfate/thiosulfate import ATP-binding protein CysA (Nephroselmis olivacea (Green alga)).